We begin with the raw amino-acid sequence, 406 residues long: Acetylornithine aminotransferase (406 aa).

Pyridoxal 5'-phosphate is bound by residues 113–114 (GT) and phenylalanine 145. Arginine 148 is a binding site for N(2)-acetyl-L-ornithine. 233 to 236 (DEIQ) contacts pyridoxal 5'-phosphate. An N6-(pyridoxal phosphate)lysine modification is found at lysine 262. A N(2)-acetyl-L-ornithine-binding site is contributed by serine 290. Threonine 291 lines the pyridoxal 5'-phosphate pocket.

It belongs to the class-III pyridoxal-phosphate-dependent aminotransferase family. ArgD subfamily. In terms of assembly, homodimer. Pyridoxal 5'-phosphate serves as cofactor.

The protein localises to the cytoplasm. The enzyme catalyses N(2)-acetyl-L-ornithine + 2-oxoglutarate = N-acetyl-L-glutamate 5-semialdehyde + L-glutamate. The protein operates within amino-acid biosynthesis; L-arginine biosynthesis; N(2)-acetyl-L-ornithine from L-glutamate: step 4/4. This is Acetylornithine aminotransferase from Leptospira interrogans serogroup Icterohaemorrhagiae serovar Lai (strain 56601).